A 199-amino-acid chain; its full sequence is Phosphoheptose isomerase (199 aa).

Positions 36–198 (MAQCLLNEHK…DRKLIPSSED (163 aa)) constitute an SIS domain. 51 to 53 (NGG) contacts substrate. Zn(2+) is bound by residues His-60 and Glu-64. Residues Glu-64, 93–94 (ND), 119–121 (STS), Ser-124, and Gln-174 each bind substrate. Gln-174 and His-182 together coordinate Zn(2+).

It belongs to the SIS family. GmhA subfamily. In terms of assembly, homotetramer. The cofactor is Zn(2+).

It localises to the cytoplasm. It catalyses the reaction 2 D-sedoheptulose 7-phosphate = D-glycero-alpha-D-manno-heptose 7-phosphate + D-glycero-beta-D-manno-heptose 7-phosphate. It participates in carbohydrate biosynthesis; D-glycero-D-manno-heptose 7-phosphate biosynthesis; D-glycero-alpha-D-manno-heptose 7-phosphate and D-glycero-beta-D-manno-heptose 7-phosphate from sedoheptulose 7-phosphate: step 1/1. Catalyzes the isomerization of sedoheptulose 7-phosphate in D-glycero-D-manno-heptose 7-phosphate. The protein is Phosphoheptose isomerase of Coxiella burnetii (strain CbuK_Q154) (Coxiella burnetii (strain Q154)).